The chain runs to 274 residues: Bis(5'-nucleosyl)-tetraphosphatase, symmetrical (274 aa).

The protein belongs to the Ap4A hydrolase family.

It catalyses the reaction P(1),P(4)-bis(5'-adenosyl) tetraphosphate + H2O = 2 ADP + 2 H(+). Its function is as follows. Hydrolyzes diadenosine 5',5'''-P1,P4-tetraphosphate to yield ADP. In Shewanella baltica (strain OS155 / ATCC BAA-1091), this protein is Bis(5'-nucleosyl)-tetraphosphatase, symmetrical.